A 431-amino-acid polypeptide reads, in one-letter code: Trigger factor (431 aa).

Positions 158 to 243 (GHLVALETWS…VIEVSEPVLL (86 aa)) constitute a PPIase FKBP-type domain.

It belongs to the FKBP-type PPIase family. Tig subfamily.

The protein resides in the cytoplasm. The enzyme catalyses [protein]-peptidylproline (omega=180) = [protein]-peptidylproline (omega=0). Involved in protein export. Acts as a chaperone by maintaining the newly synthesized protein in an open conformation. Functions as a peptidyl-prolyl cis-trans isomerase. The sequence is that of Trigger factor (tig) from Xylella fastidiosa (strain 9a5c).